We begin with the raw amino-acid sequence, 1029 residues long: Carbamoyl phosphate synthase large chain (1029 aa).

Residues 1–402 are carboxyphosphate synthetic domain; that stretch reads MPKRTDLQTI…SLQKALRSTE (402 aa). 12 residues coordinate ATP: Arg-129, Arg-169, Gly-175, Gly-176, Glu-208, Ile-210, Glu-215, Gly-241, Val-242, His-243, Gln-285, and Glu-299. Residues 133 to 328 form the ATP-grasp 1 domain; the sequence is QAAMKKIGVE…IAKIAALLAV (196 aa). Residues Gln-285, Glu-299, and Asn-301 each coordinate Mg(2+). Gln-285, Glu-299, and Asn-301 together coordinate Mn(2+). Residues 403 to 544 are oligomerization domain; sequence SDIRGVYAEM…YHYSTYEWED (142 aa). Positions 545-929 are carbamoyl phosphate synthetic domain; the sequence is EVTGTDKPKV…AFYRAQLGAK (385 aa). Positions 671 to 863 constitute an ATP-grasp 2 domain; sequence NALCERLGLS…LAKSAARIAV (193 aa). 10 residues coordinate ATP: Arg-707, Gln-747, Leu-749, Glu-754, Gly-779, Val-780, His-781, Ser-782, Gln-822, and Glu-834. 3 residues coordinate Mg(2+): Gln-822, Glu-834, and Asn-836. 3 residues coordinate Mn(2+): Gln-822, Glu-834, and Asn-836. The MGS-like domain occupies 930 to 1028; that stretch reads SYLPLSGTAL…QDWQTQEAVA (99 aa). Residues 930–1029 are allosteric domain; that stretch reads SYLPLSGTAL…DWQTQEAVAG (100 aa).

The protein belongs to the CarB family. In terms of assembly, composed of two chains; the small (or glutamine) chain promotes the hydrolysis of glutamine to ammonia, which is used by the large (or ammonia) chain to synthesize carbamoyl phosphate. Tetramer of heterodimers (alpha,beta)4. It depends on Mg(2+) as a cofactor. The cofactor is Mn(2+).

It carries out the reaction hydrogencarbonate + L-glutamine + 2 ATP + H2O = carbamoyl phosphate + L-glutamate + 2 ADP + phosphate + 2 H(+). The catalysed reaction is hydrogencarbonate + NH4(+) + 2 ATP = carbamoyl phosphate + 2 ADP + phosphate + 2 H(+). It participates in amino-acid biosynthesis; L-arginine biosynthesis; carbamoyl phosphate from bicarbonate: step 1/1. It functions in the pathway pyrimidine metabolism; UMP biosynthesis via de novo pathway; (S)-dihydroorotate from bicarbonate: step 1/3. Its function is as follows. Large subunit of the glutamine-dependent carbamoyl phosphate synthetase (CPSase). CPSase catalyzes the formation of carbamoyl phosphate from the ammonia moiety of glutamine, carbonate, and phosphate donated by ATP, constituting the first step of 2 biosynthetic pathways, one leading to arginine and/or urea and the other to pyrimidine nucleotides. The large subunit (synthetase) binds the substrates ammonia (free or transferred from glutamine from the small subunit), hydrogencarbonate and ATP and carries out an ATP-coupled ligase reaction, activating hydrogencarbonate by forming carboxy phosphate which reacts with ammonia to form carbamoyl phosphate. This chain is Carbamoyl phosphate synthase large chain, found in Deinococcus deserti (strain DSM 17065 / CIP 109153 / LMG 22923 / VCD115).